The sequence spans 346 residues: Serine/threonine-protein phosphatase PP1(4.8) (346 aa).

A disordered region spans residues 46 to 65 (QSAQTQESTPKTNGTGRATT). Positions 102, 104, 130, and 162 each coordinate Mn(2+). Residue His163 is the Proton donor of the active site. Residues His211 and His287 each coordinate Mn(2+).

The protein belongs to the PPP phosphatase family. PP-1 subfamily. Mn(2+) serves as cofactor.

It carries out the reaction O-phospho-L-seryl-[protein] + H2O = L-seryl-[protein] + phosphate. The catalysed reaction is O-phospho-L-threonyl-[protein] + H2O = L-threonyl-[protein] + phosphate. This chain is Serine/threonine-protein phosphatase PP1(4.8), found in Trypanosoma brucei brucei.